The sequence spans 260 residues: 3'-5' ssDNA/RNA exonuclease TatD (260 aa).

A divalent metal cation contacts are provided by glutamate 91, histidine 127, and histidine 152.

The protein belongs to the metallo-dependent hydrolases superfamily. TatD-type hydrolase family. TatD subfamily. Monomer. Mg(2+) is required as a cofactor. Requires Mn(2+) as cofactor.

The protein resides in the cytoplasm. Its function is as follows. 3'-5' exonuclease that prefers single-stranded DNA and RNA. May play a role in the H(2)O(2)-induced DNA damage repair. This Escherichia coli (strain K12) protein is 3'-5' ssDNA/RNA exonuclease TatD.